The chain runs to 172 residues: Adenine phosphoribosyltransferase (172 aa).

Belongs to the purine/pyrimidine phosphoribosyltransferase family. As to quaternary structure, homodimer.

The protein resides in the cytoplasm. It catalyses the reaction AMP + diphosphate = 5-phospho-alpha-D-ribose 1-diphosphate + adenine. The protein operates within purine metabolism; AMP biosynthesis via salvage pathway; AMP from adenine: step 1/1. Functionally, catalyzes a salvage reaction resulting in the formation of AMP, that is energically less costly than de novo synthesis. In Malacoplasma penetrans (strain HF-2) (Mycoplasma penetrans), this protein is Adenine phosphoribosyltransferase.